The following is a 413-amino-acid chain: Tryptophan synthase beta chain (413 aa).

At Lys107 the chain carries N6-(pyridoxal phosphate)lysine.

Belongs to the TrpB family. Tetramer of two alpha and two beta chains. It depends on pyridoxal 5'-phosphate as a cofactor.

It catalyses the reaction (1S,2R)-1-C-(indol-3-yl)glycerol 3-phosphate + L-serine = D-glyceraldehyde 3-phosphate + L-tryptophan + H2O. Its pathway is amino-acid biosynthesis; L-tryptophan biosynthesis; L-tryptophan from chorismate: step 5/5. The beta subunit is responsible for the synthesis of L-tryptophan from indole and L-serine. The polypeptide is Tryptophan synthase beta chain (Trichormus variabilis (strain ATCC 29413 / PCC 7937) (Anabaena variabilis)).